The chain runs to 98 residues: Glutaredoxin 1 (98 aa).

One can recognise a Glutaredoxin domain in the interval M1–D98. An intrachain disulfide couples C17 to C20.

The protein belongs to the glutaredoxin family. In terms of assembly, monomer.

The protein localises to the cytoplasm. In terms of biological role, has a glutathione-disulfide oxidoreductase activity in the presence of NADPH and glutathione reductase. Reduces low molecular weight disulfides and proteins. This is Glutaredoxin 1 (grxC1) from Rickettsia bellii (strain RML369-C).